A 252-amino-acid chain; its full sequence is Nicotinamide/nicotinic acid mononucleotide adenylyltransferase 3 (252 aa).

Positions 14 and 15 each coordinate NAD(+). The ATP site is built by His22 and Lys56. Residues Trp90, Thr93, Gly135, and Asp137 each contribute to the NAD(+) site. Lys140 serves as a coordination point for ATP. Leu147, Trp148, Arg167, and Asn198 together coordinate NAD(+). Residue 203–206 (TYIR) participates in ATP binding.

Belongs to the eukaryotic NMN adenylyltransferase family. As to quaternary structure, homotetramer. It depends on Mg(2+) as a cofactor. In terms of tissue distribution, expressed in lung and spleen with lower levels in placenta and kidney.

The protein resides in the mitochondrion. It catalyses the reaction beta-nicotinamide D-ribonucleotide + ATP + H(+) = diphosphate + NAD(+). It carries out the reaction nicotinate beta-D-ribonucleotide + ATP + H(+) = deamido-NAD(+) + diphosphate. Its pathway is cofactor biosynthesis; NAD(+) biosynthesis; NAD(+) from nicotinamide D-ribonucleotide: step 1/1. It functions in the pathway cofactor biosynthesis; NAD(+) biosynthesis; deamido-NAD(+) from nicotinate D-ribonucleotide: step 1/1. Its activity is regulated as follows. Activity is strongly inhibited by galotannin. Inhibited by P1-(adenosine-5')-P4-(nicotinic-acid-riboside-5')-tetraphosphate (Nap4AD). Catalyzes the formation of NAD(+) from nicotinamide mononucleotide (NMN) and ATP. Can also use the deamidated form; nicotinic acid mononucleotide (NaMN) as substrate with the same efficiency. Can use triazofurin monophosphate (TrMP) as substrate. Can also use GTP and ITP as nucleotide donors. Also catalyzes the reverse reaction, i.e. the pyrophosphorolytic cleavage of NAD(+). For the pyrophosphorolytic activity, can use NAD(+), NADH, NaAD, nicotinic acid adenine dinucleotide phosphate (NHD), nicotinamide guanine dinucleotide (NGD) as substrates. Fails to cleave phosphorylated dinucleotides NADP(+), NADPH and NaADP(+). Protects against axonal degeneration following injury. May be involved in the maintenance of axonal integrity. Also functions as a stress-response chaperone protein that prevents toxic aggregation of proteins; this function may be independent of its NAD(+) synthesis activity. The chain is Nicotinamide/nicotinic acid mononucleotide adenylyltransferase 3 from Homo sapiens (Human).